Here is a 430-residue protein sequence, read N- to C-terminus: GTPase Obg (430 aa).

Residues 1 to 158 form the Obg domain; it reads MFVDQVKISL…LDVSLELKLL (158 aa). Positions 118–145 are disordered; it reads KGGRGGRGNSRFATPRNPAPDFSEKGEP. Positions 159-329 constitute an OBG-type G domain; the sequence is ADVGLVGFPS…LLYAIADKLE (171 aa). Residues 165–172, 190–194, 212–215, 282–285, and 310–312 each bind GTP; these read GFPSVGKS, FTTIK, DLPG, NKMD, and STI. Mg(2+) contacts are provided by S172 and T192. In terms of domain architecture, OCT spans 352–430; that stretch reads KHTPSQDKFT…ILGGEFEFVE (79 aa).

This sequence belongs to the TRAFAC class OBG-HflX-like GTPase superfamily. OBG GTPase family. As to quaternary structure, monomer. Mg(2+) is required as a cofactor.

Its subcellular location is the cytoplasm. Functionally, an essential GTPase which binds GTP, GDP and possibly (p)ppGpp with moderate affinity, with high nucleotide exchange rates and a fairly low GTP hydrolysis rate. Plays a role in control of the cell cycle, stress response, ribosome biogenesis and in those bacteria that undergo differentiation, in morphogenesis control. This is GTPase Obg from Staphylococcus aureus (strain Mu3 / ATCC 700698).